A 741-amino-acid chain; its full sequence is NAD(P)H-quinone oxidoreductase subunit 5, chloroplastic (741 aa).

Transmembrane regions (helical) follow at residues 9 to 29 (WIIP…LLLF), 40 to 60 (WTFL…YLSI), 89 to 109 (IDPL…LVLI), 125 to 145 (FAYM…SNLI), 147 to 167 (VYFF…FWFT), 185 to 205 (GDFG…SFEF), 221 to 241 (VNLL…IAKS), 258 to 278 (TPIS…FLVA), 280 to 300 (LLPL…IGII), 327 to 347 (LGYM…FHLI), 354 to 374 (ALLF…VGYS), 396 to 416 (TAFL…CFWS), 425 to 445 (LLFS…TAFY), 547 to 567 (ILFP…IGIP), 602 to 622 (FLQN…IAYC), and 720 to 740 (ISSY…ILFY).

The protein belongs to the complex I subunit 5 family. In terms of assembly, NDH is composed of at least 16 different subunits, 5 of which are encoded in the nucleus.

The protein resides in the plastid. It is found in the chloroplast thylakoid membrane. The catalysed reaction is a plastoquinone + NADH + (n+1) H(+)(in) = a plastoquinol + NAD(+) + n H(+)(out). It catalyses the reaction a plastoquinone + NADPH + (n+1) H(+)(in) = a plastoquinol + NADP(+) + n H(+)(out). In terms of biological role, NDH shuttles electrons from NAD(P)H:plastoquinone, via FMN and iron-sulfur (Fe-S) centers, to quinones in the photosynthetic chain and possibly in a chloroplast respiratory chain. The immediate electron acceptor for the enzyme in this species is believed to be plastoquinone. Couples the redox reaction to proton translocation, and thus conserves the redox energy in a proton gradient. This Arabis hirsuta (Hairy rock-cress) protein is NAD(P)H-quinone oxidoreductase subunit 5, chloroplastic (ndhF).